A 442-amino-acid chain; its full sequence is FBD-associated F-box protein At1g66310 (442 aa).

An F-box domain is found at 18-64; the sequence is VDWLRDLPESLLCHILLNLPTKDVVKTSVLSSKWRNLWRLVPGLDLD. The FBD domain occupies 363–415; sequence KRRTSVLSGPRRLLSSLEYVEIESPLTGEVFEMKLVSYLLENSPILKKLTINL.

The protein is FBD-associated F-box protein At1g66310 of Arabidopsis thaliana (Mouse-ear cress).